The sequence spans 196 residues: Putative AAA family ATPase L572 (196 aa).

Residue 32 to 39 coordinates ATP; sequence NAVNCKET.

The protein belongs to the AAA ATPase family.

The polypeptide is Putative AAA family ATPase L572 (Acanthamoeba polyphaga mimivirus (APMV)).